We begin with the raw amino-acid sequence, 424 residues long: MSPNSKGVEILSIGTELLLGNIINTNAQWISEQLSQLGLNHFRQSTVGDNCDRIVKVIQEISKRSNLLITTGGLGPTPDDLTTEAIAKSFNVNLFERPHLWDEIKQKLPNSKLQDDSSSLRKQCLFPKNAQIINNPRGTAPGMIWEPIEGFTILTFPGVPSEMKTMWEETACDFIKTKFSDNYSFFSNTLKFAGIGESSVAEKINDLLNLKNPTVAPYANLGEVKLRITARAKNHLEAKNIIQPVKEKLKKDFSKFIFGENDDTLPSVLIRELTERNQTIVFAESCTGGLLSSSLTSISGSSKVFKGSVVSYSNELKNSLLNISEEKLTKYGAVSEEVCESMAINAKEKLGADWAIAISGIAGPKGGSQDKPVGLVYISISGPNNHITNIKKLFNSTRNRVEIQTLSVNVCLNSLRLILLSNSK.

This sequence belongs to the CinA family.

The polypeptide is CinA-like protein (Prochlorococcus marinus (strain AS9601)).